Consider the following 200-residue polypeptide: Inner membrane protein E199L (200 aa).

A glycan (N-linked (GlcNAc...) asparagine; by host) is linked at N131. Residues 150–170 (INVMNHPFLTLILIILILIII) traverse the membrane as a helical segment.

It belongs to the asfivirus E199L family. Interacts with host PYCR2; this interaction results in autophagy activation. In terms of processing, contains intramolecular disulfide bonds.

The protein localises to the virion membrane. Its subcellular location is the host membrane. In terms of biological role, essential for viral fusion with host endosomal membrane and core release. Not required for virus morphogenesis and egress. Induces complete autophagy through the interaction with and down-regulation of host PYCR2. This chain is Inner membrane protein E199L, found in Ornithodoros (relapsing fever ticks).